Here is a 125-residue protein sequence, read N- to C-terminus: Small ribosomal subunit protein uS12m (125 aa).

The protein belongs to the universal ribosomal protein uS12 family. Component of the mitochondrial ribosome small subunit.

The protein localises to the mitochondrion. Protein S12 is involved in the translation initiation step. This chain is Small ribosomal subunit protein uS12m (RPS12), found in Arabidopsis thaliana (Mouse-ear cress).